Here is a 254-residue protein sequence, read N- to C-terminus: Cell division protein DivIB (254 aa).

Residues 1-21 (MPNAQIPVLKKNRTKKRTSRK) are Cytoplasmic-facing. A helical membrane pass occupies residues 22-42 (IAILLILLFIVLLAVLFFRSS). Over 43-254 (LSRVSEIRFD…EEGQEKDTTQ (212 aa)) the chain is Extracellular. Residues 44–112 (SRVSEIRFDG…GIIAIHIKEF (69 aa)) enclose the POTRA domain.

The protein belongs to the FtsQ/DivIB family. DivIB subfamily.

The protein resides in the cell membrane. Functionally, cell division protein that may be involved in stabilizing or promoting the assembly of the division complex. This Paenibacillus polymyxa (strain E681) protein is Cell division protein DivIB.